The sequence spans 119 residues: Large ribosomal subunit protein bL19 (119 aa).

It belongs to the bacterial ribosomal protein bL19 family.

Functionally, this protein is located at the 30S-50S ribosomal subunit interface and may play a role in the structure and function of the aminoacyl-tRNA binding site. In Leuconostoc citreum (strain KM20), this protein is Large ribosomal subunit protein bL19.